The following is a 345-amino-acid chain: Protein RecA (345 aa).

Position 63–70 (63–70) interacts with ATP; sequence GPESSGKT. Residues 326–345 are disordered; that stretch reads VLSDALMTDPEPDADGTPED. Residues 335–345 are compositionally biased toward acidic residues; sequence PEPDADGTPED.

This sequence belongs to the RecA family.

Its subcellular location is the cytoplasm. Functionally, can catalyze the hydrolysis of ATP in the presence of single-stranded DNA, the ATP-dependent uptake of single-stranded DNA by duplex DNA, and the ATP-dependent hybridization of homologous single-stranded DNAs. It interacts with LexA causing its activation and leading to its autocatalytic cleavage. The sequence is that of Protein RecA from Gluconobacter oxydans (strain 621H) (Gluconobacter suboxydans).